A 465-amino-acid chain; its full sequence is GTPase Der (465 aa).

EngA-type G domains follow at residues 3-167 and 179-352; these read PLVA…PEEG and VRIA…ASAT. Residues 9-16, 57-61, 119-122, 185-192, 232-236, and 297-300 each bind GTP; these read GRPNVGKS, DTGGI, NKID, DTAGL, and NKWD. Positions 353–437 constitute a KH-like domain; that stretch reads HEFSTSEVNQ…PVRFIFREGA (85 aa).

It belongs to the TRAFAC class TrmE-Era-EngA-EngB-Septin-like GTPase superfamily. EngA (Der) GTPase family. Associates with the 50S ribosomal subunit.

GTPase that plays an essential role in the late steps of ribosome biogenesis. In Xanthomonas axonopodis pv. citri (strain 306), this protein is GTPase Der.